The chain runs to 359 residues: UDP-N-acetylglucosamine--N-acetylmuramyl-(pentapeptide) pyrophosphoryl-undecaprenol N-acetylglucosamine transferase (359 aa).

Residues 15–17 (SGG), asparagine 127, arginine 164, serine 192, isoleucine 246, 265–270 (ALTVSE), and glutamine 290 each bind UDP-N-acetyl-alpha-D-glucosamine.

This sequence belongs to the glycosyltransferase 28 family. MurG subfamily.

The protein localises to the cell membrane. The catalysed reaction is di-trans,octa-cis-undecaprenyl diphospho-N-acetyl-alpha-D-muramoyl-L-alanyl-D-glutamyl-meso-2,6-diaminopimeloyl-D-alanyl-D-alanine + UDP-N-acetyl-alpha-D-glucosamine = di-trans,octa-cis-undecaprenyl diphospho-[N-acetyl-alpha-D-glucosaminyl-(1-&gt;4)]-N-acetyl-alpha-D-muramoyl-L-alanyl-D-glutamyl-meso-2,6-diaminopimeloyl-D-alanyl-D-alanine + UDP + H(+). Its pathway is cell wall biogenesis; peptidoglycan biosynthesis. Its function is as follows. Cell wall formation. Catalyzes the transfer of a GlcNAc subunit on undecaprenyl-pyrophosphoryl-MurNAc-pentapeptide (lipid intermediate I) to form undecaprenyl-pyrophosphoryl-MurNAc-(pentapeptide)GlcNAc (lipid intermediate II). This is UDP-N-acetylglucosamine--N-acetylmuramyl-(pentapeptide) pyrophosphoryl-undecaprenol N-acetylglucosamine transferase from Wigglesworthia glossinidia brevipalpis.